The following is a 159-amino-acid chain: ATP synthase subunit b (159 aa).

Residues 7 to 27 (TFVWTIINFLLLLVVLSYFLF) traverse the membrane as a helical segment.

Belongs to the ATPase B chain family. As to quaternary structure, F-type ATPases have 2 components, F(1) - the catalytic core - and F(0) - the membrane proton channel. F(1) has five subunits: alpha(3), beta(3), gamma(1), delta(1), epsilon(1). F(0) has three main subunits: a(1), b(2) and c(10-14). The alpha and beta chains form an alternating ring which encloses part of the gamma chain. F(1) is attached to F(0) by a central stalk formed by the gamma and epsilon chains, while a peripheral stalk is formed by the delta and b chains.

It is found in the cell membrane. Its function is as follows. F(1)F(0) ATP synthase produces ATP from ADP in the presence of a proton or sodium gradient. F-type ATPases consist of two structural domains, F(1) containing the extramembraneous catalytic core and F(0) containing the membrane proton channel, linked together by a central stalk and a peripheral stalk. During catalysis, ATP synthesis in the catalytic domain of F(1) is coupled via a rotary mechanism of the central stalk subunits to proton translocation. Component of the F(0) channel, it forms part of the peripheral stalk, linking F(1) to F(0). The protein is ATP synthase subunit b of Clostridium novyi (strain NT).